The sequence spans 190 residues: Corticoliberin (190 aa).

The N-terminal stretch at 1 to 24 (MRLPLLVSVGVLLVALLPSPPCRA) is a signal peptide. A propeptide spanning residues 25-147 (LLSRGPIPGA…QEAPAARKRR (123 aa)) is cleaved from the precursor. Disordered regions lie at residues 33-53 (GARQASQHPQPLSFFQPLPQP) and 115-151 (PRRPLDSPAGPAKRGTENALGSRQEAPAARKRRSQEP). The segment covering 41 to 53 (PQPLSFFQPLPQP) has biased composition (low complexity). Ala-188 is subject to Alanine amide.

The protein belongs to the sauvagine/corticotropin-releasing factor/urotensin I family. As to quaternary structure, interacts (via C-terminus) with CRFR1 (via N-terminal extracellular domain). As to expression, produced by the hypothalamus.

It localises to the secreted. Functionally, hormone regulating the release of corticotropin from pituitary gland. Induces NLRP6 in intestinal epithelial cells, hence may influence gut microbiota profile. The protein is Corticoliberin (CRH) of Ovis aries (Sheep).